Consider the following 687-residue polypeptide: Polyphosphate kinase (687 aa).

N45 is a binding site for ATP. Positions 375 and 405 each coordinate Mg(2+). Catalysis depends on H435, which acts as the Phosphohistidine intermediate. ATP is bound by residues Y472, R568, and H596.

The protein belongs to the polyphosphate kinase 1 (PPK1) family. Requires Mg(2+) as cofactor. In terms of processing, an intermediate of this reaction is the autophosphorylated ppk in which a phosphate is covalently linked to a histidine residue through a N-P bond.

It catalyses the reaction [phosphate](n) + ATP = [phosphate](n+1) + ADP. Its function is as follows. Catalyzes the reversible transfer of the terminal phosphate of ATP to form a long-chain polyphosphate (polyP). The chain is Polyphosphate kinase from Burkholderia ambifaria (strain MC40-6).